A 360-amino-acid chain; its full sequence is Phosphoserine aminotransferase (360 aa).

An L-glutamate-binding site is contributed by R41. Pyridoxal 5'-phosphate is bound by residues W101, T152, D172, and Q195. K196 carries the post-translational modification N6-(pyridoxal phosphate)lysine. Pyridoxal 5'-phosphate is bound at residue N237–T238.

Belongs to the class-V pyridoxal-phosphate-dependent aminotransferase family. SerC subfamily. Homodimer. Pyridoxal 5'-phosphate is required as a cofactor.

It localises to the cytoplasm. It catalyses the reaction O-phospho-L-serine + 2-oxoglutarate = 3-phosphooxypyruvate + L-glutamate. It carries out the reaction 4-(phosphooxy)-L-threonine + 2-oxoglutarate = (R)-3-hydroxy-2-oxo-4-phosphooxybutanoate + L-glutamate. It functions in the pathway amino-acid biosynthesis; L-serine biosynthesis; L-serine from 3-phospho-D-glycerate: step 2/3. The protein operates within cofactor biosynthesis; pyridoxine 5'-phosphate biosynthesis; pyridoxine 5'-phosphate from D-erythrose 4-phosphate: step 3/5. Functionally, catalyzes the reversible conversion of 3-phosphohydroxypyruvate to phosphoserine and of 3-hydroxy-2-oxo-4-phosphonooxybutanoate to phosphohydroxythreonine. The sequence is that of Phosphoserine aminotransferase from Burkholderia ambifaria (strain MC40-6).